A 577-amino-acid chain; its full sequence is Phosphoethanolamine transferase CptA (577 aa).

Helical transmembrane passes span 17–37 (LGWA…IIYL), 45–65 (GLRD…LFPG), 69–89 (VIAA…LSYY), 119–139 (YFSL…ILLW), and 154–174 (LVSF…NTFI).

The protein belongs to the phosphoethanolamine transferase family. EptC/CptA subfamily.

It localises to the cell inner membrane. The protein operates within bacterial outer membrane biogenesis; LPS core biosynthesis. Its function is as follows. Catalyzes the addition of a phosphoethanolamine moiety to the outer membrane lipopolysaccharide core. This chain is Phosphoethanolamine transferase CptA (cptA), found in Salmonella typhimurium (strain LT2 / SGSC1412 / ATCC 700720).